The following is a 313-amino-acid chain: E3 ubiquitin-protein ligase RNF126 (313 aa).

Ala2 bears the N-acetylalanine mark. Residue Ser5 is modified to Phosphoserine. The required for interaction with BAG6 stretch occupies residues 5-101; it reads SPQPGRYFCH…FEIPTFPPGA (97 aa). Zn(2+)-binding residues include Cys13, Cys16, Cys29, and Cys32. The C4-type zinc-finger motif lies at 13 to 32; sequence CHCCSVEIVPRLPDYICPRC. Disordered regions lie at residues 42-64 and 96-128; these read EETRSAENGSAPSTASADQSRQQ and TFPPGAQADDSRDPESRREREQHSRHRYGARQP. Residues 47-64 show a composition bias toward polar residues; the sequence is AENGSAPSTASADQSRQQ. The segment covering 104–117 has biased composition (basic and acidic residues); sequence DDSRDPESRREREQ. Residues 118 to 128 are compositionally biased toward basic residues; that stretch reads HSRHRYGARQP. Residues 203–306 form a sufficient for interaction with AICDA region; the sequence is TGPPPADKEK…SSSSSSSPGN (104 aa). The RING-type zinc-finger motif lies at 232-273; the sequence is CPVCKDDYGLGEHVRQLPCNHLFHDGCIVPWLEQHDSCPVCR. The disordered stretch occupies residues 280-313; that stretch reads NTATDPPGLAGVSFSSSSSSSSSSPGNENPASSS. Positions 292–313 are enriched in low complexity; that stretch reads SFSSSSSSSSSSPGNENPASSS.

As to quaternary structure, interacts with CCDC50, EGFR, FLT3 and SCAMP3. Interacts with BAG6 (via ubiquitin-like domain); required for BAG6-dependent ubiquitination of proteins mislocalized to the cytosol. Interacts with CDKN1A. Interacts with AICDA. Post-translationally, ubiquitinated. May undergo autoubiquitination.

It localises to the cytoplasm. It is found in the nucleus. It catalyses the reaction S-ubiquitinyl-[E2 ubiquitin-conjugating enzyme]-L-cysteine + [acceptor protein]-L-lysine = [E2 ubiquitin-conjugating enzyme]-L-cysteine + N(6)-ubiquitinyl-[acceptor protein]-L-lysine.. It functions in the pathway protein modification; protein ubiquitination. Its function is as follows. E3 ubiquitin-protein ligase that mediates ubiquitination oF target proteins. Depending on the associated E2 ligase, mediates 'Lys-27'-, 'Lys-29'-, 'Lys-48'- and/or 'Lys-63'-linked polyubiquitination of substrates. Part of a BAG6-dependent quality control process ensuring that proteins of the secretory pathway that are mislocalized to the cytosol are degraded by the proteasome. Probably acts by providing the ubiquitin ligase activity associated with the BAG6 complex and be responsible for ubiquitination of the hydrophobic mislocalized proteins and their targeting to the proteasome. May also play a role in the endosomal recycling of IGF2R, the cation-independent mannose-6-phosphate receptor. May play a role in the endosomal sorting and degradation of several membrane receptors including EGFR, FLT3, MET and CXCR4, by mediating their ubiquitination. By ubiquitinating CDKN1A/p21 and targeting it for degradation, may also promote cell proliferation. May monoubiquitinate AICDA. Acts as a regulator of DNA repair by mediating 'Lys-27'- and 'Lys-29'-linked polyubiquitination of MRE11, thereby promoting the exonuclease activity of MRE11. This is E3 ubiquitin-protein ligase RNF126 from Bos taurus (Bovine).